Consider the following 329-residue polypeptide: UDP-glucose 4-epimerase (329 aa).

Residues 11 to 12, 31 to 36, 51 to 52, 71 to 75, threonine 115, tyrosine 139, lysine 143, and phenylalanine 167 each bind NAD(+); these read YV, DNFSTG, DV, and FAARS. Substrate contacts are provided by threonine 115 and tyrosine 139. The Proton acceptor role is filled by tyrosine 139. Substrate-binding positions include asparagine 168, 185–186, 202–204, arginine 217, and 277–280; these read HL, FMF, and RAGD.

The protein belongs to the NAD(P)-dependent epimerase/dehydratase family. Homodimer. Requires NAD(+) as cofactor.

The enzyme catalyses UDP-alpha-D-glucose = UDP-alpha-D-galactose. It participates in carbohydrate metabolism; galactose metabolism. Its function is as follows. Involved in the metabolism of galactose. Catalyzes the conversion of UDP-galactose (UDP-Gal) to UDP-glucose (UDP-Glc) through a mechanism involving the transient reduction of NAD. This is UDP-glucose 4-epimerase (galE) from Corynebacterium glutamicum (strain ATCC 13032 / DSM 20300 / JCM 1318 / BCRC 11384 / CCUG 27702 / LMG 3730 / NBRC 12168 / NCIMB 10025 / NRRL B-2784 / 534).